The primary structure comprises 392 residues: tRNA (guanine-N(7)-)-methyltransferase (392 aa).

S-adenosyl-L-methionine is bound by residues Glu123, Glu148, and Asp175. Substrate contacts are provided by Lys201 and Asp231.

Belongs to the class I-like SAM-binding methyltransferase superfamily. TrmB family.

It catalyses the reaction guanosine(46) in tRNA + S-adenosyl-L-methionine = N(7)-methylguanosine(46) in tRNA + S-adenosyl-L-homocysteine. The protein operates within tRNA modification; N(7)-methylguanine-tRNA biosynthesis. In terms of biological role, catalyzes the formation of N(7)-methylguanine at position 46 (m7G46) in tRNA. The polypeptide is tRNA (guanine-N(7)-)-methyltransferase (Campylobacter jejuni subsp. jejuni serotype O:6 (strain 81116 / NCTC 11828)).